The following is a 234-amino-acid chain: Opacity protein opA55 (234 aa).

Ala1 is a signal peptide.

It belongs to the opacity porin family.

The protein resides in the cell outer membrane. Its function is as follows. Implicated in a number of adherence functions. OPA proteins are implicated in pathogenesis and are subject to phase variation. The sequence is that of Opacity protein opA55 (opaE) from Neisseria gonorrhoeae.